The following is a 347-amino-acid chain: Microtubule-associated protein Jupiter (347 aa).

Polar residues predominate over residues 1 to 14 (MISNFDCTDNQASS). The segment at 1-33 (MISNFDCTDNQASSKVLRPPGGGSSDIFGSEMP) is disordered. A Phosphoserine modification is found at Ser-24. Phosphothreonine occurs at positions 35 and 96. Ser-105, Ser-134, and Ser-145 each carry phosphoserine. Disordered regions lie at residues 127 to 193 (HYNG…PTPP) and 303 to 347 (GNPV…SGLW). Over residues 132–145 (SGSVSSASSSVSSS) the composition is skewed to low complexity. Over residues 146 to 164 (TENLKMNSGSRSVFRNMST) the composition is skewed to polar residues. The span at 181-193 (PPSPVPIEVPTPP) shows a compositional bias: pro residues.

This sequence belongs to the MAP Jupiter family.

The protein localises to the nucleus. The protein resides in the cytoplasm. Its subcellular location is the cytoskeleton. It localises to the spindle. Binds to all microtubule populations. The chain is Microtubule-associated protein Jupiter from Drosophila yakuba (Fruit fly).